Here is a 218-residue protein sequence, read N- to C-terminus: Probable 2-aminoethanethiol dioxygenase (218 aa).

Fe cation serves as cofactor.

The enzyme catalyses cysteamine + O2 = hypotaurine + H(+). The polypeptide is Probable 2-aminoethanethiol dioxygenase (ado-1) (Dictyostelium discoideum (Social amoeba)).